Here is a 390-residue protein sequence, read N- to C-terminus: Telobox protein 1 (390 aa).

A disordered region spans residues 30-57 (ENPSKREVAQDVPGFERKPTKVRKPRVK). The span at 32 to 48 (PSKREVAQDVPGFERKP) shows a compositional bias: basic and acidic residues. HTH myb-type domains are found at residues 50-109 (KVRK…PEDY) and 135-193 (STRK…PERY). The H-T-H motif DNA-binding region spans 78–105 (WKKILLDERFHFTNRSPNDLKDRFRTIL). The tract at residues 115 to 143 (NAKTHMGRPQKIPHTVGLSKSTRKERKQF) is disordered. Residues 162-189 (WTRISKDANLGLQNRRSTDLRDRFRNAF) constitute a DNA-binding region (H-T-H motif). 2 stretches are compositionally biased toward polar residues: residues 244–257 (SNPN…TEQP) and 322–340 (ISPS…SIQQ). Disordered stretches follow at residues 244 to 278 (SNPN…FTSQ) and 316 to 390 (QPPS…DNRG). The segment covering 347-360 (PPLSSNTLNSSTLP) has biased composition (low complexity).

Its subcellular location is the nucleus. General transcription factor with prominent roles in controlling histone levels and stability. Binds and regulates the activities of many promoters, including those controlling the expression of all four types of canonical histones. Is also involved in the centromeric loading of cnp1 and maintenance of centromere identity. Moreover, regulates the expression of cdc2, a protease capable of histone clipping. The sequence is that of Telobox protein 1 from Schizosaccharomyces pombe (strain 972 / ATCC 24843) (Fission yeast).